Consider the following 362-residue polypeptide: Endopolygalacturonase II (362 aa).

The first 20 residues, 1–20 (MHSFASLLRYGLAAGATLAS), serve as a signal peptide directing secretion. A propeptide spanning residues 21–27 (ASPIEAR) is cleaved from the precursor. A disulfide bridge links cysteine 30 with cysteine 45. Residues 156 to 186 (SDDITLTDITINNADGDSLGGHNTDAFDVGN) form a PbH1 1 repeat. The Proton donor role is filled by aspartate 201. Cysteine 203 and cysteine 219 are disulfide-bonded. 4 PbH1 repeats span residues 209 to 229 (GENIWFTGGTCIGGHGLSIGS), 238 to 259 (VKNVTIEHSTVSNSENAVRIKT), 267 to 289 (VSEITYSNIVMSGISDYGVVIQQ), and 301 to 322 (TNGVTITDVKLESVTGTVDSKA). The active site involves histidine 223. Residue asparagine 240 is glycosylated (N-linked (GlcNAc...) asparagine). Intrachain disulfides connect cysteine 329–cysteine 334 and cysteine 353–cysteine 362.

This sequence belongs to the glycosyl hydrolase 28 family.

It localises to the secreted. The catalysed reaction is (1,4-alpha-D-galacturonosyl)n+m + H2O = (1,4-alpha-D-galacturonosyl)n + (1,4-alpha-D-galacturonosyl)m.. Functionally, involved in maceration and soft-rotting of plant tissue. Hydrolyzes the 1,4-alpha glycosidic bonds of de-esterified pectate in the smooth region of the plant cell wall. This chain is Endopolygalacturonase II (pgaII), found in Aspergillus awamori (Black koji mold).